The sequence spans 557 residues: NAD(P)H-quinone oxidoreductase chain 4 (557 aa).

14 consecutive transmembrane segments (helical) span residues 25 to 45 (FPWLSLSILFPIAGSLLVPFI), 57 to 77 (YALFIALTTFLITVGAYLKGF), 111 to 131 (LILLTSFITALAVLAAWPVSF), 133 to 153 (PKLFFFLILAMDGGQIAVFAV), 157 to 177 (LLFFLAWELELLPVYLLLAIW), 189 to 209 (FIIYTAGSSLFILLAGLAMGF), 230 to 250 (GFQLLCYGGLLIAFGVKLPIV), 264 to 284 (TAPVHMLLAGILLKMGGYALL), 298 to 318 (FAPLLIVLGVVNIIYAALTSF), 327 to 347 (IAYSSISHMGFVLIGIGSFST), 353 to 373 (AMLQMISHGLIGASLFFLVGA), 397 to 417 (FALWTVCSLASLALPGMSGFV), 438 to 458 (IVIAGLAAIGVILTPIYLLSM), and 485 to 505 (IYIIGSLLVPIIGIGLYPRIM).

The protein belongs to the complex I subunit 4 family.

The protein localises to the cellular thylakoid membrane. It carries out the reaction a plastoquinone + NADH + (n+1) H(+)(in) = a plastoquinol + NAD(+) + n H(+)(out). The catalysed reaction is a plastoquinone + NADPH + (n+1) H(+)(in) = a plastoquinol + NADP(+) + n H(+)(out). Its function is as follows. NDH-1 shuttles electrons from NAD(P)H, via FMN and iron-sulfur (Fe-S) centers, to quinones in the respiratory chain. The immediate electron acceptor for the enzyme in this species is believed to be plastoquinone. Couples the redox reaction to proton translocation (for every two electrons transferred, four hydrogen ions are translocated across the cytoplasmic membrane), and thus conserves the redox energy in a proton gradient. The polypeptide is NAD(P)H-quinone oxidoreductase chain 4 (Prochlorococcus marinus (strain SARG / CCMP1375 / SS120)).